A 215-amino-acid chain; its full sequence is Cytochrome b6 (215 aa).

The helical transmembrane segment at 32–52 (IFYCLGGITFTCFLLQVASGF) threads the bilayer. Residue cysteine 35 participates in heme c binding. Heme b contacts are provided by histidine 86 and histidine 100. 3 consecutive transmembrane segments (helical) span residues 90 to 110 (ASMM…TGGF), 116 to 136 (LTWV…VTGY), and 186 to 206 (LHTF…FLMI). Residues histidine 187 and histidine 202 each contribute to the heme b site.

It belongs to the cytochrome b family. PetB subfamily. In terms of assembly, the 4 large subunits of the cytochrome b6-f complex are cytochrome b6, subunit IV (17 kDa polypeptide, PetD), cytochrome f and the Rieske protein, while the 4 small subunits are PetG, PetL, PetM and PetN. The complex functions as a dimer. It depends on heme b as a cofactor. Heme c serves as cofactor.

Its subcellular location is the plastid. The protein localises to the chloroplast thylakoid membrane. In terms of biological role, component of the cytochrome b6-f complex, which mediates electron transfer between photosystem II (PSII) and photosystem I (PSI), cyclic electron flow around PSI, and state transitions. This Coleochaete orbicularis (Charophycean green alga) protein is Cytochrome b6.